The sequence spans 344 residues: Anamorsin homolog 1 (344 aa).

Residues 1–169 (MANNVGVLLA…DTGSVFQIRK (169 aa)) are N-terminal SAM-like domain. The interval 170-233 (KVSNQNGNFR…EDDLLTEEDL (64 aa)) is linker. The [2Fe-2S] cluster site is built by Cys-244, Cys-251, Cys-254, and Cys-256. Residues 244-256 (CAPTKKACKNCTC) are fe-S binding site A. [4Fe-4S] cluster is bound by residues Cys-282, Cys-285, Cys-293, and Cys-296. 2 consecutive short sequence motifs (cx2C motif) follow at residues 282–285 (CGSC) and 293–296 (CAGC). The fe-S binding site B stretch occupies residues 282–296 (CGSCGLGDAFRCAGC).

This sequence belongs to the anamorsin family. As to quaternary structure, monomer. It depends on [2Fe-2S] cluster as a cofactor. The cofactor is [4Fe-4S] cluster.

The protein localises to the cytoplasm. Its subcellular location is the mitochondrion intermembrane space. Component of the cytosolic iron-sulfur (Fe-S) protein assembly (CIA) machinery. Required for the maturation of extramitochondrial Fe-S proteins. Part of an electron transfer chain functioning in an early step of cytosolic Fe-S biogenesis, facilitating the de novo assembly of a [4Fe-4S] cluster on the cytosolic Fe-S scaffold complex. Electrons are transferred from NADPH via a FAD- and FMN-containing diflavin oxidoreductase. Together with the diflavin oxidoreductase, also required for the assembly of the diferric tyrosyl radical cofactor of ribonucleotide reductase (RNR), probably by providing electrons for reduction during radical cofactor maturation in the catalytic small subunit. In Physcomitrium patens (Spreading-leaved earth moss), this protein is Anamorsin homolog 1.